The following is a 388-amino-acid chain: Succinate--CoA ligase [ADP-forming] subunit beta (388 aa).

Residues 9–244 (KQLFQKYGVP…LDEEDPFEIE (236 aa)) form the ATP-grasp domain. ATP-binding positions include Lys-46, 53–55 (GRG), Glu-99, Leu-102, and Glu-107. 2 residues coordinate Mg(2+): Asn-199 and Asp-213. Substrate is bound by residues Asn-265 and 322–324 (GIL).

This sequence belongs to the succinate/malate CoA ligase beta subunit family. Heterotetramer of two alpha and two beta subunits. Mg(2+) is required as a cofactor.

It catalyses the reaction succinate + ATP + CoA = succinyl-CoA + ADP + phosphate. The enzyme catalyses GTP + succinate + CoA = succinyl-CoA + GDP + phosphate. It participates in carbohydrate metabolism; tricarboxylic acid cycle; succinate from succinyl-CoA (ligase route): step 1/1. Its function is as follows. Succinyl-CoA synthetase functions in the citric acid cycle (TCA), coupling the hydrolysis of succinyl-CoA to the synthesis of either ATP or GTP and thus represents the only step of substrate-level phosphorylation in the TCA. The beta subunit provides nucleotide specificity of the enzyme and binds the substrate succinate, while the binding sites for coenzyme A and phosphate are found in the alpha subunit. The polypeptide is Succinate--CoA ligase [ADP-forming] subunit beta (Syntrophobacter fumaroxidans (strain DSM 10017 / MPOB)).